Reading from the N-terminus, the 263-residue chain is Ubiquinone/menaquinone biosynthesis C-methyltransferase UbiE (263 aa).

S-adenosyl-L-methionine-binding residues include threonine 86, aspartate 107, and serine 152.

It belongs to the class I-like SAM-binding methyltransferase superfamily. MenG/UbiE family.

The catalysed reaction is a 2-demethylmenaquinol + S-adenosyl-L-methionine = a menaquinol + S-adenosyl-L-homocysteine + H(+). It catalyses the reaction a 2-methoxy-6-(all-trans-polyprenyl)benzene-1,4-diol + S-adenosyl-L-methionine = a 5-methoxy-2-methyl-3-(all-trans-polyprenyl)benzene-1,4-diol + S-adenosyl-L-homocysteine + H(+). It participates in quinol/quinone metabolism; menaquinone biosynthesis; menaquinol from 1,4-dihydroxy-2-naphthoate: step 2/2. It functions in the pathway cofactor biosynthesis; ubiquinone biosynthesis. Its function is as follows. Methyltransferase required for the conversion of demethylmenaquinol (DMKH2) to menaquinol (MKH2) and the conversion of 2-polyprenyl-6-methoxy-1,4-benzoquinol (DDMQH2) to 2-polyprenyl-3-methyl-6-methoxy-1,4-benzoquinol (DMQH2). The polypeptide is Ubiquinone/menaquinone biosynthesis C-methyltransferase UbiE (Brucella anthropi (strain ATCC 49188 / DSM 6882 / CCUG 24695 / JCM 21032 / LMG 3331 / NBRC 15819 / NCTC 12168 / Alc 37) (Ochrobactrum anthropi)).